The primary structure comprises 156 residues: Arginine repressor (156 aa).

This sequence belongs to the ArgR family.

It is found in the cytoplasm. Its pathway is amino-acid biosynthesis; L-arginine biosynthesis [regulation]. Functionally, regulates arginine biosynthesis genes. The polypeptide is Arginine repressor (Pectobacterium atrosepticum (strain SCRI 1043 / ATCC BAA-672) (Erwinia carotovora subsp. atroseptica)).